A 309-amino-acid polypeptide reads, in one-letter code: Beta-lactamase (309 aa).

The N-terminal stretch at 1 to 28 (MMILKNKRMLKIGICVGILGLSITSLEA) is a signal peptide. Ser-92 acts as the Acyl-ester intermediate in catalysis. Residue Glu-188 is the Proton acceptor of the active site. Residue 254–256 (KSG) participates in substrate binding.

This sequence belongs to the class-A beta-lactamase family.

It carries out the reaction a beta-lactam + H2O = a substituted beta-amino acid. In terms of biological role, this protein is a beta-lactamase with a substrate specificity for penicillins. In Bacillus thuringiensis, this protein is Beta-lactamase (bla).